The chain runs to 172 residues: Large ribosomal subunit protein uL10 (172 aa).

It belongs to the universal ribosomal protein uL10 family. Part of the ribosomal stalk of the 50S ribosomal subunit. The N-terminus interacts with L11 and the large rRNA to form the base of the stalk. The C-terminus forms an elongated spine to which L12 dimers bind in a sequential fashion forming a multimeric L10(L12)X complex.

Its function is as follows. Forms part of the ribosomal stalk, playing a central role in the interaction of the ribosome with GTP-bound translation factors. In Idiomarina loihiensis (strain ATCC BAA-735 / DSM 15497 / L2-TR), this protein is Large ribosomal subunit protein uL10.